The primary structure comprises 291 residues: Glutamate racemase (291 aa).

Substrate is bound by residues 12–13 and 44–45; these read DS and YG. The active-site Proton donor/acceptor is Cys75. 76-77 is a binding site for substrate; it reads NT. Cys187 functions as the Proton donor/acceptor in the catalytic mechanism. 188 to 189 provides a ligand contact to substrate; the sequence is TH. Over residues 234 to 247 the composition is skewed to low complexity; sequence ATQAAGARAQMAPS. Positions 234–257 are disordered; it reads ATQAAGARAQMAPSAPEPKEGTPD.

It belongs to the aspartate/glutamate racemases family.

The catalysed reaction is L-glutamate = D-glutamate. It functions in the pathway cell wall biogenesis; peptidoglycan biosynthesis. Provides the (R)-glutamate required for cell wall biosynthesis. The protein is Glutamate racemase of Koribacter versatilis (strain Ellin345).